A 631-amino-acid chain; its full sequence is Dolichyl-diphosphooligosaccharide--protein glycosyltransferase subunit 2 (631 aa).

The first 22 residues, 1–22, serve as a signal peptide directing secretion; the sequence is MASPGASTVFLLALTILAGTQA. The Lumenal portion of the chain corresponds to 23–540; that stretch reads LTPTHYLTKP…REPEKRPPTV (518 aa). Residue asparagine 106 is glycosylated (N-linked (GlcNAc...) asparagine). A Glycyl lysine isopeptide (Lys-Gly) (interchain with G-Cter in ubiquitin) cross-link involves residue lysine 154. A helical transmembrane segment spans residues 541–561; sequence VSNTFTALILSPLLLLFALWI. The Cytoplasmic portion of the chain corresponds to 562-571; that stretch reads RIGANVSNFT. Residues 572–592 form a helical membrane-spanning segment; that stretch reads FAPSTIIFHLGHAAMLGLMYV. The Lumenal portion of the chain corresponds to 593–596; sequence YWTQ. The chain crosses the membrane as a helical span at residues 597–617; that stretch reads LNMFQTLKYLAILGSVTFLAG. Topologically, residues 618–631 are cytoplasmic; the sequence is NRMLAQQAIKRTAH.

The protein belongs to the SWP1 family. In terms of assembly, component of the oligosaccharyltransferase (OST) complex. OST exists in two different complex forms which contain common core subunits RPN1, RPN2, OST48, OST4, DAD1 and TMEM258, either STT3A or STT3B as catalytic subunits, and form-specific accessory subunits. STT3A complex assembly occurs through the formation of 3 subcomplexes. Subcomplex 1 contains RPN1 and TMEM258, subcomplex 2 contains the STT3A-specific subunits STT3A, DC2/OSTC, and KCP2 as well as the core subunit OST4, and subcomplex 3 contains RPN2, DAD1, and OST48. The STT3A complex can form stable complexes with the Sec61 complex or with both the Sec61 and TRAP complexes. Interacts with DDI2. Interacts with TMEM35A/NACHO.

Its subcellular location is the endoplasmic reticulum. It is found in the endoplasmic reticulum membrane. Its pathway is protein modification; protein glycosylation. In terms of biological role, subunit of the oligosaccharyl transferase (OST) complex that catalyzes the initial transfer of a defined glycan (Glc(3)Man(9)GlcNAc(2) in eukaryotes) from the lipid carrier dolichol-pyrophosphate to an asparagine residue within an Asn-X-Ser/Thr consensus motif in nascent polypeptide chains, the first step in protein N-glycosylation. N-glycosylation occurs cotranslationally and the complex associates with the Sec61 complex at the channel-forming translocon complex that mediates protein translocation across the endoplasmic reticulum (ER). All subunits are required for a maximal enzyme activity. In Canis lupus familiaris (Dog), this protein is Dolichyl-diphosphooligosaccharide--protein glycosyltransferase subunit 2.